A 570-amino-acid polypeptide reads, in one-letter code: Set1/Ash2 histone methyltransferase complex subunit ash-2 (570 aa).

The PHD-type zinc finger occupies 19–76; that stretch reads TTVCYCDGKRELGSVEVVCSTCLKWFHGRCLKEFHELNSNGVPFMICYTFTCKQCRPT. A disordered region spans residues 201-242; the sequence is NREPRHIELPPIEGPKTRGASKRRHAEAPVTGKKQKLAADYS. The B30.2/SPRY domain maps to 270 to 468; it reads PNVPEDPAWN…TLVEMPGSYI (199 aa).

As to quaternary structure, component of the SET2 complex (also known as the SET1/COMPASS complex), which contains at least set-2, swd-2.1, cfp-1, rbbp-5, wdr-5.1, dpy-30 and ash-2. Within the complex, interacts with cfp-1 and wdr-5.1. Expressed in somatic and germline tissues (at protein level).

Its subcellular location is the nucleus. In terms of biological role, component of the set-2/ash-2 histone methyltransferase (HMT) complex. Required for the di- and trimethylation at 'Lys-4' of histone H3, a mark associated with epigenetic transcriptional activation. Implicated in the epigenetic inheritance of lifespan over several generations. Functions as a transcriptional regulator. Acts in the germline to limit the longevity of the soma, probably by regulating a lipid metabolism pathway that signals from the germline to the intestine, thereby preventing accumulation of mono-unsaturated fatty acids. The protein is Set1/Ash2 histone methyltransferase complex subunit ash-2 of Caenorhabditis elegans.